Consider the following 692-residue polypeptide: Chaperone protein dnaK1 (692 aa).

Position 197 is a phosphothreonine; by autocatalysis (T197).

It belongs to the heat shock protein 70 family.

Acts as a chaperone. The protein is Chaperone protein dnaK1 (dnaK1) of Synechocystis sp. (strain ATCC 27184 / PCC 6803 / Kazusa).